Reading from the N-terminus, the 251-residue chain is Ubiquinone/menaquinone biosynthesis C-methyltransferase UbiE (251 aa).

Residues Thr74, Asp95, and 123-124 (NA) contribute to the S-adenosyl-L-methionine site.

The protein belongs to the class I-like SAM-binding methyltransferase superfamily. MenG/UbiE family.

The enzyme catalyses a 2-demethylmenaquinol + S-adenosyl-L-methionine = a menaquinol + S-adenosyl-L-homocysteine + H(+). It catalyses the reaction a 2-methoxy-6-(all-trans-polyprenyl)benzene-1,4-diol + S-adenosyl-L-methionine = a 5-methoxy-2-methyl-3-(all-trans-polyprenyl)benzene-1,4-diol + S-adenosyl-L-homocysteine + H(+). It functions in the pathway quinol/quinone metabolism; menaquinone biosynthesis; menaquinol from 1,4-dihydroxy-2-naphthoate: step 2/2. It participates in cofactor biosynthesis; ubiquinone biosynthesis. Its function is as follows. Methyltransferase required for the conversion of demethylmenaquinol (DMKH2) to menaquinol (MKH2) and the conversion of 2-polyprenyl-6-methoxy-1,4-benzoquinol (DDMQH2) to 2-polyprenyl-3-methyl-6-methoxy-1,4-benzoquinol (DMQH2). The chain is Ubiquinone/menaquinone biosynthesis C-methyltransferase UbiE from Shewanella halifaxensis (strain HAW-EB4).